Reading from the N-terminus, the 240-residue chain is Adenylate dimethylallyltransferase (240 aa).

It belongs to the isopentenyl transferase family.

It catalyses the reaction dimethylallyl diphosphate + AMP = N(6)-(dimethylallyl)adenosine 5'-phosphate + diphosphate. Its function is as follows. Transfers dimethylallyl groups to AMP as part of the biosynthesis of cytokinin phytohormones. This is Adenylate dimethylallyltransferase (izt) from Agrobacterium tumefaciens (strain Ach5).